Here is a 309-residue protein sequence, read N- to C-terminus: Ribokinase (309 aa).

Substrate contacts are provided by residues 14-16 (NAD), 42-46 (GKGAN), and Glu-143. Residues Asn-187 and 223-228 (TLGSRG) each bind ATP. K(+) contacts are provided by Asp-249 and Ile-251. Residues 254–255 (GD) and His-279 contribute to the ATP site. Position 255 (Asp-255) interacts with substrate. Residue Asp-255 is the Proton acceptor of the active site. The K(+) site is built by Ala-285, Arg-288, Gly-290, and Ser-294.

Belongs to the carbohydrate kinase PfkB family. Ribokinase subfamily. As to quaternary structure, homodimer. The cofactor is Mg(2+).

The protein localises to the cytoplasm. It carries out the reaction D-ribose + ATP = D-ribose 5-phosphate + ADP + H(+). The protein operates within carbohydrate metabolism; D-ribose degradation; D-ribose 5-phosphate from beta-D-ribopyranose: step 2/2. With respect to regulation, activated by a monovalent cation that binds near, but not in, the active site. The most likely occupant of the site in vivo is potassium. Ion binding induces a conformational change that may alter substrate affinity. Its function is as follows. Catalyzes the phosphorylation of ribose at O-5 in a reaction requiring ATP and magnesium. The resulting D-ribose-5-phosphate can then be used either for sythesis of nucleotides, histidine, and tryptophan, or as a component of the pentose phosphate pathway. This chain is Ribokinase, found in Escherichia coli O157:H7.